Consider the following 571-residue polypeptide: Glutamate--tRNA ligase (571 aa).

The 'HIGH' region motif lies at 110–120 (PNPNGPATLGS).

This sequence belongs to the class-I aminoacyl-tRNA synthetase family. Glutamate--tRNA ligase type 2 subfamily.

It is found in the cytoplasm. It carries out the reaction tRNA(Glu) + L-glutamate + ATP = L-glutamyl-tRNA(Glu) + AMP + diphosphate. Its function is as follows. Catalyzes the attachment of glutamate to tRNA(Glu) in a two-step reaction: glutamate is first activated by ATP to form Glu-AMP and then transferred to the acceptor end of tRNA(Glu). This Methanosarcina mazei (strain ATCC BAA-159 / DSM 3647 / Goe1 / Go1 / JCM 11833 / OCM 88) (Methanosarcina frisia) protein is Glutamate--tRNA ligase.